We begin with the raw amino-acid sequence, 488 residues long: Probable multidrug resistance protein NorM (488 aa).

12 consecutive transmembrane segments (helical) span residues 11–31, 55–75, 97–117, 127–147, 159–179, 190–210, 247–267, 271–291, 317–337, 355–375, 393–413, and 421–441; these read AILR…AMVF, YAFV…LVAI, AALA…LLVF, AMQF…FMVL, PVMA…YSFI, LAGI…LLAL, GTYA…GIIG, LAAH…PVGL, VGIG…WWMP, VAAM…FDGT, FLVG…LLAF, and GVWW…TLAF.

The protein belongs to the multi antimicrobial extrusion (MATE) (TC 2.A.66.1) family.

Its subcellular location is the cell inner membrane. Its function is as follows. Multidrug efflux pump. This chain is Probable multidrug resistance protein NorM (norM), found in Pseudomonas aeruginosa (strain ATCC 15692 / DSM 22644 / CIP 104116 / JCM 14847 / LMG 12228 / 1C / PRS 101 / PAO1).